A 135-amino-acid polypeptide reads, in one-letter code: Small ribosomal subunit protein uS11 (135 aa).

The protein belongs to the universal ribosomal protein uS11 family. In terms of assembly, part of the 30S ribosomal subunit. Interacts with proteins S7 and S18. Binds to IF-3.

In terms of biological role, located on the platform of the 30S subunit, it bridges several disparate RNA helices of the 16S rRNA. Forms part of the Shine-Dalgarno cleft in the 70S ribosome. This chain is Small ribosomal subunit protein uS11, found in Polynucleobacter asymbioticus (strain DSM 18221 / CIP 109841 / QLW-P1DMWA-1) (Polynucleobacter necessarius subsp. asymbioticus).